We begin with the raw amino-acid sequence, 818 residues long: Cytosolic phospholipase A2 delta (818 aa).

Positions 5-124 constitute a C2 domain; the sequence is SPGGPPGHPY…LPGKLLRKTF (120 aa). The Ca(2+) site is built by aspartate 38, aspartate 44, aspartate 94, aspartate 96, and aspartate 102. The PLA2c domain occupies 273–818; sequence GCPEELAVHL…LEARPPRAQT (546 aa). 330–331 contributes to the substrate binding site; sequence GG. Serine 361 serves as the catalytic Nucleophile. The Proton acceptor role is filled by aspartate 647.

It depends on Ca(2+) as a cofactor. Expressed in stratified squamous epithelia, such as those in skin and cervix, but not in other tissues. Strongly expressed in the upper spinous layer of the psoriatic epidermis, expressed weakly and discontinuously in atopic dermatitis and mycosis fungoides, and not detected in the epidermis of normal skin.

It localises to the cytoplasm. The protein resides in the cytosol. Its subcellular location is the membrane. The enzyme catalyses a 1,2-diacyl-sn-glycero-3-phosphocholine + H2O = a 1-acyl-sn-glycero-3-phosphocholine + a fatty acid + H(+). It catalyses the reaction 1-hexadecanoyl-2-(5Z,8Z,11Z,14Z-eicosatetraenoyl)-sn-glycero-3-phosphocholine + H2O = 1-hexadecanoyl-sn-glycero-3-phosphocholine + (5Z,8Z,11Z,14Z)-eicosatetraenoate + H(+). It carries out the reaction 1-hexadecanoyl-2-(9Z,12Z-octadecadienoyl)-sn-glycero-3-phosphocholine + H2O = (9Z,12Z)-octadecadienoate + 1-hexadecanoyl-sn-glycero-3-phosphocholine + H(+). The catalysed reaction is 1-hexadecanoyl-2-(9Z-octadecenoyl)-sn-glycero-3-phosphocholine + H2O = 1-hexadecanoyl-sn-glycero-3-phosphocholine + (9Z)-octadecenoate + H(+). The enzyme catalyses 1-hexadecanoyl-2-(5Z,8Z,11Z,14Z-eicosatetraenoyl)-sn-glycero-3-phosphoethanolamine + H2O = 1-hexadecanoyl-sn-glycero-3-phosphoethanolamine + (5Z,8Z,11Z,14Z)-eicosatetraenoate + H(+). It catalyses the reaction 1-hexadecanoyl-2-(9Z,12Z-octadecadienoyl)-sn-glycero-3-phosphoethanolamine + H2O = 1-hexadecanoyl-sn-glycero-3-phosphoethanolamine + (9Z,12Z)-octadecadienoate + H(+). The protein operates within lipid metabolism; fatty acid metabolism. With respect to regulation, stimulated by cytosolic Ca(2+). Its function is as follows. Calcium-dependent phospholipase A2 that selectively hydrolyzes glycerophospholipids in the sn-2 position. Has a preference for linoleic acid at the sn-2 position. This chain is Cytosolic phospholipase A2 delta, found in Homo sapiens (Human).